The chain runs to 124 residues: MATINQLVRKPRQATTYKSASPALDKCPQRRGVCTRVYTTTPKKPNSALRKVAKVRLTNQEEVISYIGGEGHNLQEHSVVLIRGGRVKDLPGVRYHTVRGSLDAAGVAKRRQGRSKYGAKRPKS.

A disordered region spans residues 1 to 25; it reads MATINQLVRKPRQATTYKSASPALD. Residue aspartate 89 is modified to 3-methylthioaspartic acid.

This sequence belongs to the universal ribosomal protein uS12 family. Part of the 30S ribosomal subunit. Contacts proteins S8 and S17. May interact with IF1 in the 30S initiation complex.

Functionally, with S4 and S5 plays an important role in translational accuracy. In terms of biological role, interacts with and stabilizes bases of the 16S rRNA that are involved in tRNA selection in the A site and with the mRNA backbone. Located at the interface of the 30S and 50S subunits, it traverses the body of the 30S subunit contacting proteins on the other side and probably holding the rRNA structure together. The combined cluster of proteins S8, S12 and S17 appears to hold together the shoulder and platform of the 30S subunit. The sequence is that of Small ribosomal subunit protein uS12 from Xanthomonas campestris pv. campestris (strain 8004).